The following is a 499-amino-acid chain: Lysine--tRNA ligase (499 aa).

Residues glutamate 409 and glutamate 416 each contribute to the Mg(2+) site.

Belongs to the class-II aminoacyl-tRNA synthetase family. Homodimer. Mg(2+) is required as a cofactor.

The protein localises to the cytoplasm. The enzyme catalyses tRNA(Lys) + L-lysine + ATP = L-lysyl-tRNA(Lys) + AMP + diphosphate. This Thioalkalivibrio sulfidiphilus (strain HL-EbGR7) protein is Lysine--tRNA ligase.